The sequence spans 409 residues: N-acetylglucosamine-6-phosphate deacetylase (409 aa).

Glutamate 143 contributes to the a divalent metal cation binding site. 154–155 (AH) is a binding site for substrate. A divalent metal cation is bound by residues histidine 211 and histidine 232. Substrate contacts are provided by residues 235-236 (NA), arginine 243, and 269-272 (DGIH). Residue aspartate 294 is the Proton donor/acceptor of the active site. A substrate-binding site is contributed by 328-330 (LSG).

Belongs to the metallo-dependent hydrolases superfamily. NagA family. The cofactor is a divalent metal cation.

It catalyses the reaction N-acetyl-D-glucosamine 6-phosphate + H2O = D-glucosamine 6-phosphate + acetate. The protein operates within amino-sugar metabolism; N-acetylneuraminate degradation. Hydrolyzes the N-glycolyl group from N-glycolylglucosamine 6-phosphate (GlcNGc-6-P) in the N-glycolylneuraminic acid (Neu5Gc) degradation pathway. In Rattus norvegicus (Rat), this protein is N-acetylglucosamine-6-phosphate deacetylase (Amdhd2).